The sequence spans 337 residues: Leucine-rich repeat-containing protein 39 (337 aa).

9 LRR repeats span residues 84 to 105 (QLQEWQLHRTGLLKIPEFIGRF), 107 to 128 (HLIVLDLSRNTISEIPRGIGLL), 130 to 152 (RLQELILSYNKIKTVPKELSNCT), 153 to 176 (SLEKLELAVNRDISDLPPELSKLL), 177 to 198 (KLTHLDLSMNQFTTIPHAVLDM), 200 to 221 (ALEWLDMGSNSLQQLPDSLDRM), 223 to 244 (SLHTLWLQRNEITCLPETIKNM), 246 to 267 (NLGTLVLSNNKLQDIPGCMEEM), and 269 to 290 (NLRFVNFRDNPLRLEVTLPPSD).

As to quaternary structure, interacts with MYH7 (via C-terminus). As to expression, expressed in heart and skeletal muscle.

It is found in the cytoplasm. The protein resides in the myofibril. The protein localises to the sarcomere. It localises to the m line. Functionally, component of the sarcomeric M-band which plays a role in myocyte response to biomechanical stress. May regulate expression of other M-band proteins via an SRF-dependent pathway. Important for normal contractile function in heart. In Mus musculus (Mouse), this protein is Leucine-rich repeat-containing protein 39.